A 380-amino-acid chain; its full sequence is Glycogenin-2 (380 aa).

3 residues coordinate UDP: leucine 10, tyrosine 16, and arginine 95. UDP-alpha-D-glucose contacts are provided by leucine 10, tyrosine 16, arginine 95, lysine 104, aspartate 120, alanine 121, aspartate 122, asparagine 158, threonine 159, aspartate 185, aspartate 188, and glutamine 189. 3 residues coordinate UDP: aspartate 120, alanine 121, and aspartate 122. A Mn(2+)-binding site is contributed by aspartate 120. Aspartate 122 contacts Mn(2+). Residues tyrosine 230 and tyrosine 232 are each glycosylated (O-linked (Glc...) tyrosine). Residues histidine 249, glycine 252, and lysine 255 each coordinate UDP. Position 249 (histidine 249) interacts with Mn(2+). UDP-alpha-D-glucose is bound by residues glycine 252 and lysine 255. The disordered stretch occupies residues serine 331 to glutamine 355. The segment covering threonine 341–threonine 351 has biased composition (basic and acidic residues). The O-linked (Glc...) tyrosine glycan is linked to tyrosine 367.

It belongs to the glycosyltransferase 8 family. Glycogenin subfamily. Interacts with glycogen synthase GSY2. Requires Mn(2+) as cofactor.

The protein resides in the cytoplasm. It localises to the vacuole. The enzyme catalyses L-tyrosyl-[glycogenin] + UDP-alpha-D-glucose = alpha-D-glucosyl-L-tyrosyl-[glycogenin] + UDP + H(+). It carries out the reaction [1,4-alpha-D-glucosyl](n)-L-tyrosyl-[glycogenin] + UDP-alpha-D-glucose = [1,4-alpha-D-glucosyl](n+1)-L-tyrosyl-[glycogenin] + UDP + H(+). In terms of biological role, self-glucosylating initiator of glycogen synthesis. It catalyzes the formation of a short alpha (1,4)-glucosyl chain covalently attached via a glucose 1-O-tyrosyl linkage to internal tyrosine residues and these chains act as primers for the elongation reaction catalyzed by glycogen synthase. Capable of transferring glucosyl residues to unbound acceptors such as free oligoglucans or oligoglucan derivatives. In Saccharomyces cerevisiae (strain ATCC 204508 / S288c) (Baker's yeast), this protein is Glycogenin-2.